The primary structure comprises 156 residues: Arginine repressor (156 aa).

Belongs to the ArgR family.

It is found in the cytoplasm. Its pathway is amino-acid biosynthesis; L-arginine biosynthesis [regulation]. Regulates arginine biosynthesis genes. This Salmonella paratyphi C (strain RKS4594) protein is Arginine repressor.